A 296-amino-acid polypeptide reads, in one-letter code: Enoyl-CoA hydratase AFT3-1 (296 aa).

Residues 294-296 carry the Peroxisomal targeting signal type 1 motif; it reads PKL.

This sequence belongs to the enoyl-CoA hydratase/isomerase family.

The protein localises to the peroxisome. It catalyses the reaction a (3S)-3-hydroxyacyl-CoA = a (2E)-enoyl-CoA + H2O. The enzyme catalyses a 4-saturated-(3S)-3-hydroxyacyl-CoA = a (3E)-enoyl-CoA + H2O. It participates in mycotoxin biosynthesis. Its function is as follows. Enoyl-CoA hydratase; part of the gene clusters that mediate the biosynthesis of the host-selective toxins (HSTs) AF-toxins responsible for Alternaria black spot of strawberry disease by the strawberry pathotype. AF-toxin I and III are valine derivatives of 2,3-dyhydroxy-isovaleric acid and 2-hydroxy-isovaleric acid respectively, while AF II is an isoleucine derivative of 2-hydroxy-valeric acid. These derivatives are bound to a 9,10-epoxy-8-hydroxy-9-methyl-decatrienoic acid (EDA) moiety. On cellular level, AF-toxins affect plasma membrane of susceptible cells and cause a sudden increase in loss of K(+) after a few minutes of toxin treatment. The aldo-keto reductase AFTS1 catalyzes the conversion of 2-keto-isovaleric acid (2-KIV) to 2-hydroxy-isovaleric acid (2-HIV) by reduction of its ketone to an alcohol. The acyl-CoA ligase AFT1, the hydrolase AFT2 and the enoyl-CoA hydratases AFT3 and AFT6, but also the polyketide synthase AFT9, the acyl-CoA dehydrogenase AFT10, the cytochrome P450 monooxygenase AFT11 and the oxidoreductase AFT12 are all involved in the biosynthesis of the AK-, AF- and ACT-toxin common EDA structural moiety. The exact function of each enzyme, and of additional enzymes identified within the AF-toxin clusters have still to be determined. This Alternaria alternata (Alternaria rot fungus) protein is Enoyl-CoA hydratase AFT3-1 (AFT3-1).